The following is a 102-amino-acid chain: Redox- and pH-responsive transcriptional regulator WhiB3 (102 aa).

The 4Fe-4S Wbl-type domain maps to 22–86 (LCRGMDSSMF…GGLSESERDL (65 aa)). [4Fe-4S] cluster-binding residues include cysteine 23, cysteine 53, cysteine 56, and cysteine 62.

This sequence belongs to the WhiB family. In terms of assembly, homodimer. Interacts with the C-terminal 54 residues of sigma factor SigA (RpoV). It depends on [4Fe-4S] cluster as a cofactor. The 4Fe-4S cluster interacts with NO, forming a protein-bound dinitrosyliron dithiol complex. In terms of processing, the 4Fe-4S cluster interacts with O(2), leading to its degradation. Cluster loss takes about 2 hours. Once in the apo-form the cysteines oxidize to form 2 intramolecular disulfide bonds.

The protein resides in the cytoplasm. Functionally, a redox-sensitive transcriptional regulator. Maintains intracellular redox homeostasis by regulating catabolic metabolism and polyketide biosynthesis. Regulates expression of the redox buffer ergothioneine (ERG) in a carbon-source-dependent manner; loss of ERG or mycothiol (MSH, the other major redox buffer in this bacteria) leads to respiratory alterations and bioenergetic deficiencies that negatively impact virulence. In response to low external pH (like that found in host macrophage phagosomes) alters endogenous gene expression leading to acid resistance; MSH and WhiB3 are probably part of a regulatory circuit that mediates gene expression upon acid stress. Regulates pathogenic lipid synthesis, coordinating proprionate flux (and other host-derived fatty acid oxidation intermediates) into methyl-branched fatty acids (polyacyltrehalose, phthiocerol dimycocerosates, sulfolipids) and the storage lipid triacylglycerol, functioning as reductive sink. During intracellular growth M.tuberculosis uses host fatty acids as an energy source, generating large quantities of proprionate and NADH/NADPH, which are toxic and highly reducing respectively. WhiB3 is thought to help dissipate proprionate and NADH/NADPH by switching to the in vivo carbon source and via lipid anabolism. Responds to NO and O(2). Regulates expression of genes encoding modular polyketide synthases such as pks2, pks3 and fbpA. The oxidized apo-form of WhiB3 binds DNA (with 2 intramolecular disulfide bonds); holo-WhiB3 (with the 4Fe-4S cluster) binds DNA considerably less well. Discriminates poorly between specific and non-specific DNA-binding. Plays a role in virulence and nutritional stress. In its apo-form can act as a protein disulfide reductase. Its function is as follows. May respond to mycothiol (MSH) redox potential (E-MSH) which decreases at pH 4.5 for up to 72 hours, indicative of cellular reductive stress; deletion of whiB3 leads to a lesser E-MSH at 72 hours, indicative of cellular oxidative stress. Probably via its effects on production of polyketide lipids, regulates host gene expression, leading to blockage of phagosome maturation. Equilibration of extra- and intracytoplasmic pH kills bacteria. The chain is Redox- and pH-responsive transcriptional regulator WhiB3 (whiB3) from Mycobacterium tuberculosis (strain ATCC 25618 / H37Rv).